The sequence spans 714 residues: Sodium-dependent acetylcholine transporter (714 aa).

Residues 1–21 (MSVSSNDPEQRNGRGMASGNN) form a disordered region. At 1-74 (MSVSSNDPEQ…GNWSNKSDYL (74 aa)) the chain is on the cytoplasmic side. The next 3 membrane-spanning stretches (helical) occupy residues 75 to 95 (LAVIGFTAGVGSFWKFPFLVF), 100 to 120 (AAFLVPYLCMLCLASLPMFFM), and 152 to 172 (ISGFFAVFFNIISAWTLFYLI). The Extracellular portion of the chain corresponds to 173-257 (NSFSFSIPWS…LSKGVDDFGT (85 aa)). Residues Asn192, Asn205, Asn211, and Asn222 are each glycosylated (N-linked (GlcNAc...) asparagine). 9 helical membrane passes run 258–278 (LNWYLGLCVLACWIAVFLCLF), 287–307 (VVYVAVIVPFIILTVLLTRLL), 336–356 (AAVQAFYSVSCCSGGLFTIAS), 368–388 (IWLVLIVDVIVSLVGCLLTFS), 422–442 (AGVSVAPLYAGLFFIMILLVV), 476–496 (VCALFILLSIPFCLSSGLFWM), 502–522 (FVLTWPLVVIAFLECMAINWV), 548–568 (ILFKFICPMVYLAILCFLWLD), and 584–604 (ILTAWCIASFPLILIPIVGIW). Over 605–714 (QFCIAKGTIT…IPKFERETAI (110 aa)) the chain is Cytoplasmic.

This sequence belongs to the sodium:neurotransmitter symporter (SNF) (TC 2.A.22) family. Interacts with stn-1; part of the DGC. As to expression, body wall, and vulval and enteric muscles.

Its subcellular location is the cell membrane. It localises to the postsynaptic cell membrane. Functionally, mediates sodium-dependent uptake of acetylcholine at neuromuscular junctions during periods of increased synaptic activity, may also prevent spillover to adjacent synaptic sites. Not involved in the uptake of other neurotransmitters (GABA, glycine, proline and glutamate) and there was also no inhibition of uptake by adding an excess of other candidate substrates (GABA, glycine, taurine, creatine, proline, alanine, carnitine, glutamate and betaine). Required for muscle integrity; altered transport of acetylcholine due to loss of dystrophin-glycoprotein complex (DGC) function results in muscle degeneration. The protein is Sodium-dependent acetylcholine transporter of Caenorhabditis elegans.